The sequence spans 140 residues: Virion protein 5 (140 aa).

The protein resides in the virion. The protein is Virion protein 5 of Enterococcus faecalis (Streptococcus faecalis).